The following is a 370-amino-acid chain: 3-dehydroquinate synthase (370 aa).

NAD(+) is bound by residues 108–112 (GVIGD), 132–133 (TT), lysine 145, and lysine 154. 3 residues coordinate Zn(2+): glutamate 187, histidine 249, and histidine 267.

It belongs to the sugar phosphate cyclases superfamily. Dehydroquinate synthase family. The cofactor is Co(2+). Zn(2+) is required as a cofactor. Requires NAD(+) as cofactor.

It localises to the cytoplasm. The catalysed reaction is 7-phospho-2-dehydro-3-deoxy-D-arabino-heptonate = 3-dehydroquinate + phosphate. The protein operates within metabolic intermediate biosynthesis; chorismate biosynthesis; chorismate from D-erythrose 4-phosphate and phosphoenolpyruvate: step 2/7. Its function is as follows. Catalyzes the conversion of 3-deoxy-D-arabino-heptulosonate 7-phosphate (DAHP) to dehydroquinate (DHQ). This is 3-dehydroquinate synthase from Cereibacter sphaeroides (strain ATCC 17029 / ATH 2.4.9) (Rhodobacter sphaeroides).